The sequence spans 562 residues: Putative transport protein YPA_0617 (562 aa).

The next 6 membrane-spanning stretches (helical) occupy residues 8-28 (LLNGNYILLLFVVLALGLCLG), 37-57 (LGNAIGVLVVSLLLGQQHFAI), 66-86 (FMLFIFCVGVEAGPNFFSIFF), 94-114 (MLALVMVGSAMILALGLGKLF), 118-138 (IGLTAGMLAGSMTSTPVLVGA), and 158-178 (NLSLGYALTYLIGLVSLILGA). 2 RCK C-terminal domains span residues 202–288 (LDTD…SFRN) and 290–373 (KEVF…KIGF). Helical transmembrane passes span 383–403 (LLAFCSFFILGLMIGLITFQF), 406–426 (FSFGIGNAAGLLLAGIMLGFL), 447–467 (FGLMVFMAGVGLSAGGGINSS), 475–495 (MLISGLIVSLVPVVICFVFGA), and 541–561 (IANVLLTLAGSLIVILWPGIL).

This sequence belongs to the AAE transporter (TC 2.A.81) family. YbjL subfamily.

It localises to the cell membrane. This Yersinia pestis bv. Antiqua (strain Antiqua) protein is Putative transport protein YPA_0617.